We begin with the raw amino-acid sequence, 545 residues long: E3 ubiquitin-protein ligase ipaH9.8 (545 aa).

The segment at 1-242 (MLPINNNFSL…YHGPRIYFSM (242 aa)) is interaction with target proteins. 8 LRR repeats span residues 57 to 77 (NSDE…NLPA), 78 to 99 (QITL…PVTL), 100 to 117 (KKLY…VLPP), 118 to 139 (ALES…PDSL), 140 to 157 (LTMN…SLPQ), 158 to 179 (ALKN…SEGN), 182 to 203 (VVRE…ILNL), and 205 to 228 (NECS…QRLT). The tract at residues 243–250 (SDGQQNTL) is linker. The E3 ubiquitin-protein ligase catalytic domain stretch occupies residues 251–545 (HRPLADAVTA…SENGSQLHHS (295 aa)). An NEL domain is found at 253-545 (PLADAVTAWF…SENGSQLHHS (293 aa)). Cys-337 acts as the Glycyl thioester intermediate in catalysis.

This sequence belongs to the LRR-containing bacterial E3 ligase family. Also interacts with human and mouse U2AF1 (U2AF35). In terms of processing, ubiquitinated in the presence of host E1 ubiquitin-activating enzyme, E2 ubiquitin-conjugating enzyme and ubiquitin.

It is found in the secreted. The protein resides in the host cytoplasm. The protein localises to the host nucleus. The catalysed reaction is S-ubiquitinyl-[E2 ubiquitin-conjugating enzyme]-L-cysteine + [acceptor protein]-L-lysine = [E2 ubiquitin-conjugating enzyme]-L-cysteine + N(6)-ubiquitinyl-[acceptor protein]-L-lysine.. Its activity is regulated as follows. Exists in an autoinhibited state in the absence of substrate protein, due to interactions of the leucine-rich repeats with NEL domain. Is activated upon binding to a substrate protein. Its function is as follows. Effector E3 ubiquitin ligase that interferes with host's ubiquitination pathway and modulates the acute inflammatory responses, thus facilitating bacterial colonization within the host cell. Interacts with IKBKG (NEMO) and TNIP1 (ABIN-1), a ubiquitin-binding adapter protein, which results in TNIP1-dependent 'Lys-27'-linked polyubiquitination of IKBKG. Consequently, polyubiquitinated IKBKG undergoes proteasome-dependent degradation, which perturbs NF-kappa-B activation during bacterial infection. Mediates polyubiquitination of host U2AF1, leading to its proteasomal degradation. Catalyzes 'Lys-48'-linked polyubiquitination and subsequent degradation of a subset of host guanylate-binding proteins (GBP1, GBP2, GBP4 and GBP6), thereby suppressing host cell defense. In contrast, host GBP3 and GBP7 are not ubiquitinated by IpaH9.8. Uses UBE2D2 (UBCH5B) as an E2 ubiquitin-conjugating enzyme. This chain is E3 ubiquitin-protein ligase ipaH9.8 (ipaH9.8), found in Shigella sonnei (strain Ss046).